The following is a 267-amino-acid chain: Farnesyl diphosphate phosphatase YisP (267 aa).

The protein belongs to the phytoene/squalene synthase family. In terms of assembly, monomer.

The catalysed reaction is (2E,6E)-farnesyl diphosphate + H2O = (2E,6E)-farnesol + diphosphate. With respect to regulation, diphosphate release from FPP is inhibited by zaragozic acid. Functionally, a farnesyl diphosphate (FPP) phosphatase. Involved in biofilm formation, its disruption blocks biofilm synthesis which is restored by exogenous farnesol. Releases diphosphate from FPP, was initally suggested to be a squalene synthase. Diphosphate release is higher from FPP than geranyl pyrophosphate (GPP) or geranylgeranyl pyrophosphate (GGPP). Biofilm synthesis is partially restored by exogenous squalene, beta-carotene or retinol. Required for integrity of cell membrane lipid rafts. Involved in spatial organization of membranes, required for the flotillin-like proteins FloT and FloA to function correctly. The protein is Farnesyl diphosphate phosphatase YisP (yisP) of Bacillus subtilis (strain 168).